The chain runs to 401 residues: Na(+)/H(+) antiporter NhaA 2 (401 aa).

11 consecutive transmembrane segments (helical) span residues 13–33, 59–79, 94–114, 125–145, 154–174, 178–198, 209–229, 260–280, 292–312, 332–352, and 363–383; these read AAGGVLLVIAAAIAMVLANSP, LLLWVNDGLMAIFFFLVGLEV, ITLPAVAAIAGIVFPALIYVW, GWAIPSATDIAFAVGVFTIFG, LFLLSVAIFDDIGAIVIIALF, DLSTTSLIVACAGFVALFLLN, VLIGVVVWAAVLKSGVHATLA, WVGFVVLPIFAFANAGVSLFG, LGIAVGLFVGKQLGIFGVCWI, GVSLLCGIGFTMSLFIGSLAF, and VKAGVLLGSLVSAVLGAVLLA.

The protein belongs to the NhaA Na(+)/H(+) (TC 2.A.33) antiporter family.

It localises to the cell inner membrane. It catalyses the reaction Na(+)(in) + 2 H(+)(out) = Na(+)(out) + 2 H(+)(in). Na(+)/H(+) antiporter that extrudes sodium in exchange for external protons. In Pseudoalteromonas atlantica (strain T6c / ATCC BAA-1087), this protein is Na(+)/H(+) antiporter NhaA 2.